We begin with the raw amino-acid sequence, 319 residues long: Pantothenate kinase (319 aa).

Glycine 101–serine 108 serves as a coordination point for ATP.

It belongs to the prokaryotic pantothenate kinase family.

Its subcellular location is the cytoplasm. It catalyses the reaction (R)-pantothenate + ATP = (R)-4'-phosphopantothenate + ADP + H(+). It functions in the pathway cofactor biosynthesis; coenzyme A biosynthesis; CoA from (R)-pantothenate: step 1/5. The protein is Pantothenate kinase of Clavibacter michiganensis subsp. michiganensis (strain NCPPB 382).